We begin with the raw amino-acid sequence, 62 residues long: Large ribosomal subunit protein uL29 (62 aa).

Belongs to the universal ribosomal protein uL29 family.

The chain is Large ribosomal subunit protein uL29 from Geobacter sulfurreducens (strain ATCC 51573 / DSM 12127 / PCA).